Consider the following 403-residue polypeptide: Lissencephaly-1 homolog 1 (403 aa).

In terms of domain architecture, LisH spans 7 to 38 (QRDELNQAIHQYLLISYQQSAQLFKTEAAVKD). Residues 51 to 87 (NSIVRLSKRVITLEQQVEQLNEQLAQAQAGKIQFNKS) adopt a coiled-coil conformation. WD repeat units follow at residues 103–142 (GHRA…FEKT), 145–184 (GHTS…CVKT), 187–226 (GHEH…CKKT), 229–270 (EHQE…HQLS), 271–327 (GHEH…NLFT), 330–369 (GHDN…QKKK), and 373–403 (AHDK…WLLS).

This sequence belongs to the WD repeat LIS1/nudF family.

The protein localises to the cytoplasm. Its subcellular location is the cytoskeleton. The protein resides in the microtubule organizing center. It is found in the centrosome. In terms of biological role, positively regulates the activity of the minus-end directed microtubule motor protein dynein. May enhance dynein-mediated microtubule sliding by targeting dynein to the microtubule plus end. Required for several dynein- and microtubule-dependent processes. The sequence is that of Lissencephaly-1 homolog 1 from Paramecium tetraurelia.